The sequence spans 706 residues: B-cell lymphoma 6 protein (706 aa).

A BTB domain is found at 32–99 (TDVVIVVSRE…MYTSRLNLRE (68 aa)). Residues 317 to 349 (EPPNAPLNRKGLVSPQSPQKSDCQPNSPTESCS) are disordered. The segment covering 330–349 (SPQSPQKSDCQPNSPTESCS) has biased composition (polar residues). S333 and S343 each carry phosphoserine; by MAPK1. The residue at position 361 (S361) is a Phosphoserine. The interval 376 to 379 (KKYK) is required for interaction with NuRD complex and for transcriptional repressor activity. K379 carries the N6-acetyllysine modification. S404 is subject to Phosphoserine. The interval 407–467 (AYTAPPACQP…PRSSSESHSP (61 aa)) is disordered. Over residues 424 to 456 (DLQSPTKLSASGEDSTIPQASRLNNIVNRSMTG) the composition is skewed to polar residues. Residues 457–466 (SPRSSSESHS) are compositionally biased toward low complexity. C2H2-type zinc fingers lie at residues 518–541 (FFCNECDCRFSEEASLKRHTLQTH), 546–568 (YKCDRCQASFRYKGNLASHKTVH), 574–596 (YRCNICGAQFNRPANLKTHTRIH), 602–624 (YKCETCGARFVQVAHLRAHVLIH), 630–652 (YPCEICGTRFRHLQTLKSHLRIH), and 658–681 (YHCEKCNLHFRHKSQLRLHLRQKH).

As to quaternary structure, homodimer. Interacts (via BTB domain) with the corepressors BCOR, NCOR1 and SMRT/NCOR2; the interactions are direct. Forms preferably ternary complexes with BCOR and SMRT/NCOR2 on target gene promoters but, on enhancer elements, interacts with SMRT/NCOR2 and HDAC3 to repress proximal gene expression. Interacts with histone deacetylases HDAC2, HDAC5 and HDAC9 (via the catalytic domain). Interacts with ZBTB7 and BCL6B. Interacts with SCF(FBXO11) complex; the interaction is independent of phosphorylation and promotes ubiquitination. Interacts (when phosphorylated) with PIN1; the interaction is required for BCL6 degradation upon genotoxic stress. Interacts with ZBTB17; inhibits ZBTB17 transcriptional activity. Interacts with CTBP1, autoinhibits its transcriptional expression. Interacts with NOTCH1 NCID and SIRT1; leads to a epigenetic repression of selective NOTCH1-target genes. Interacts (nor via BTB domain neither acetylated) with the NuRD complex components CHD4, HDAC1, MBD3 and MTA3; the interaction with MTA3 inhibits BCL6 acetylation and is required for BCL6 transpriptional repression. In terms of processing, phosphorylated by MAPK1 in response to antigen receptor activation at Ser-333 and Ser-343. Phosphorylated by ATM in response to genotoxic stress. Phosphorylation induces its degradation by ubiquitin/proteasome pathway. Post-translationally, polyubiquitinated. Polyubiquitinated by SCF(FBXO11), leading to its degradation by the proteasome. Ubiquitinated by the SCF(FBXL17) complex, leading to its degradation by the proteasome: ubiquitination by the SCF(FBXL17) complex takes place when aberrant BTB domain dimers are formed. Acetylated at Lys-379 by EP300 which inhibits the interaction with NuRD complex and the transcriptional repressor function. Deacetylated by HDAC- and SIR2-dependent pathways. As to expression, expressed in germinal center T- and B-cells and in primary immature dendritic cells.

It is found in the nucleus. Functionally, transcriptional repressor mainly required for germinal center (GC) formation and antibody affinity maturation which has different mechanisms of action specific to the lineage and biological functions. Forms complexes with different corepressors and histone deacetylases to repress the transcriptional expression of different subsets of target genes. Represses its target genes by binding directly to the DNA sequence 5'-TTCCTAGAA-3' (BCL6-binding site) or indirectly by repressing the transcriptional activity of transcription factors. In GC B-cells, represses genes that function in differentiation, inflammation, apoptosis and cell cycle control, also autoregulates its transcriptional expression and up-regulates, indirectly, the expression of some genes important for GC reactions, such as AICDA, through the repression of microRNAs expression, like miR155. An important function is to allow GC B-cells to proliferate very rapidly in response to T-cell dependent antigens and tolerate the physiological DNA breaks required for immunglobulin class switch recombination and somatic hypermutation without inducing a p53/TP53-dependent apoptotic response. In follicular helper CD4(+) T-cells (T(FH) cells), promotes the expression of T(FH)-related genes but inhibits the differentiation of T(H)1, T(H)2 and T(H)17 cells. Also required for the establishment and maintenance of immunological memory for both T- and B-cells. Suppresses macrophage proliferation through competition with STAT5 for STAT-binding motifs binding on certain target genes, such as CCL2 and CCND2. In response to genotoxic stress, controls cell cycle arrest in GC B-cells in both p53/TP53-dependedent and -independent manners. Besides, also controls neurogenesis through the alteration of the composition of NOTCH-dependent transcriptional complexes at selective NOTCH targets, such as HES5, including the recruitment of the deacetylase SIRT1 and resulting in an epigenetic silencing leading to neuronal differentiation. In Homo sapiens (Human), this protein is B-cell lymphoma 6 protein (BCL6).